The chain runs to 295 residues: Putative F-box protein At5g44220 (295 aa).

Residues 56-102 (STNSDLLPMDLIKEILKRLPAKTLARFLCVSKLWSSIIRSRDLMKLF) form the F-box domain.

This is Putative F-box protein At5g44220 from Arabidopsis thaliana (Mouse-ear cress).